Here is a 255-residue protein sequence, read N- to C-terminus: Geranylgeranylglyceryl phosphate synthase (255 aa).

Mg(2+) contacts are provided by D34 and T64. Residues Y182–G188, G213–G214, and G235–N236 contribute to the sn-glycerol 1-phosphate site.

Belongs to the GGGP/HepGP synthase family. Group II subfamily. The cofactor is Mg(2+).

The protein resides in the cytoplasm. The enzyme catalyses sn-glycerol 1-phosphate + (2E,6E,10E)-geranylgeranyl diphosphate = sn-3-O-(geranylgeranyl)glycerol 1-phosphate + diphosphate. It participates in membrane lipid metabolism; glycerophospholipid metabolism. In terms of biological role, prenyltransferase that catalyzes the transfer of the geranylgeranyl moiety of geranylgeranyl diphosphate (GGPP) to the C3 hydroxyl of sn-glycerol-1-phosphate (G1P). This reaction is the first ether-bond-formation step in the biosynthesis of archaeal membrane lipids. This Saccharolobus islandicus (strain M.14.25 / Kamchatka #1) (Sulfolobus islandicus) protein is Geranylgeranylglyceryl phosphate synthase.